An 888-amino-acid polypeptide reads, in one-letter code: E3 ubiquitin-protein ligase SH3RF1 (888 aa).

The segment at 12–53 adopts an RING-type zinc-finger fold; it reads CPVCLERLDASAKVLPCQHTFCKRCLLGIVGSRNELRCPECR. A compositionally biased stretch (polar residues) spans 108-127; that stretch reads SSKDLQSSQGGQQPRVQSWS. The interval 108–128 is disordered; it reads SSKDLQSSQGGQQPRVQSWSP. SH3 domains are found at residues 134–193 and 196–259; these read PQLP…IIKP and QPPP…FNSA. The tract at residues 275–321 is disordered; the sequence is DAGECSSAAAQSSTAPKHSDTKKNTKKRHSFTSLTMANKSSQASQNR. The interaction with RAC1 stretch occupies residues 292-362; it reads HSDTKKNTKK…APSQVHISTT (71 aa). Serine 304 is modified (phosphoserine). Positions 305–321 are enriched in polar residues; the sequence is FTSLTMANKSSQASQNR. The tract at residues 440 to 543 is interaction with AKT2; that stretch reads HLRPQTRPSV…STAGGPAQKL (104 aa). The SH3 3 domain maps to 445–506; it reads TRPSVYVAIY…PGNYVAPVTR (62 aa). 3 disordered regions span residues 516 to 548, 620 to 639, and 684 to 741; these read VPMS…GNGV, SVGL…LMPG, and TVLP…ASPT. The span at 520-535 shows a compositional bias: polar residues; sequence TAGQTSRGVTMVSPST. Phosphoserine is present on serine 532. Polar residues predominate over residues 692–704; sequence SPDSASSACGNSS. Basic and acidic residues predominate over residues 707–718; that stretch reads KPDKDSKKEKKG. Serine 735 carries the phosphoserine modification. In terms of domain architecture, SH3 4 spans 829-888; that stretch reads VVCERHRVVVSYPPQSEAELELKEGDIVFVHKKREDGWFKGTLQRNGKTGLFPGSFVENI.

The protein belongs to the SH3RF family. As to quaternary structure, interacts with RAC1; in a GTP-dependent manner. Interacts with MAP3K10/MLK2 and MAP3K11/MLK3. Interacts with MAPK8IP; this interaction leads to the PJAC complex (POSH-JIP or SH3RF1/MAPK8IP apoptotic complex) with a 1:1 ratio. Interacts with SIAH1. Interacts with HERP1. Probably part of a signaling complex that may contain SH3RF1, MAPK8IP, DLK1, MAP2K4/MKK4, MAP2K7/MKK7, MAPK8/JNK1, MAPK9/JNK2, AKT1 and AKT2. Found in a complex with RAC2, MAP3K7/TAK1, MAP2K7/MKK7, MAPK8IP1/JIP1, MAPK8/JNK1 and MAPK9/JNK2. Found in a complex with RAC1, MAP3K11/MLK3, MAP2K7/MKK7, MAPK8IP1/JIP1 and MAPK8/JNK1. Interacts with SH3RF2. In terms of processing, phosphorylated at Ser-304 by AKT1 and AKT2. When phosphorylated, it has reduced ability to bind Rac. Autoubiquitinated. Ubiquitinated by SH3RF2, leading to proteasome-mediated degradation.

It is found in the cytoplasm. The protein resides in the perinuclear region. Its subcellular location is the cell projection. The protein localises to the lamellipodium. It localises to the golgi apparatus. It is found in the trans-Golgi network. The enzyme catalyses S-ubiquitinyl-[E2 ubiquitin-conjugating enzyme]-L-cysteine + [acceptor protein]-L-lysine = [E2 ubiquitin-conjugating enzyme]-L-cysteine + N(6)-ubiquitinyl-[acceptor protein]-L-lysine.. The protein operates within protein modification; protein ubiquitination. Its function is as follows. Has E3 ubiquitin-protein ligase activity. In the absence of an external substrate, it can catalyze self-ubiquitination. Stimulates ubiquitination of potassium channel KCNJ1, enhancing it's dynamin-dependent and clathrin-independent endocytosis. Acts as a scaffold protein that coordinates with MAPK8IP1/JIP1 in organizing different components of the JNK pathway, including RAC1 or RAC2, MAP3K11/MLK3 or MAP3K7/TAK1, MAP2K7/MKK7, MAPK8/JNK1 and/or MAPK9/JNK2 into a functional multiprotein complex to ensure the effective activation of the JNK signaling pathway. Regulates the differentiation of CD4(+) and CD8(+) T-cells and promotes T-helper 1 (Th1) cell differentiation. Regulates the activation of MAPK8/JNK1 and MAPK9/JNK2 in CD4(+) T-cells and the activation of MAPK8/JNK1 in CD8(+) T-cells. Plays a crucial role in the migration of neocortical neurons in the developing brain. Controls proper cortical neuronal migration and the formation of proximal cytoplasmic dilation in the leading process (PCDLP) in migratory neocortical neurons by regulating the proper localization of activated RAC1 and F-actin assembly. In terms of biological role, (Microbial infection) Plays an essential role in the targeting of HIV-1 Gag to the plasma membrane, this function is dependent on it's RING domain, and hence it's E3 ligase activity. The protein is E3 ubiquitin-protein ligase SH3RF1 (SH3RF1) of Homo sapiens (Human).